We begin with the raw amino-acid sequence, 57 residues long: MSFGLTGLTGTGLAGLAGLICIGLTISSGFSGSSILIHIHSLVQMHNLGTVYISYYK.

Residues 15 to 37 (GLAGLICIGLTISSGFSGSSILI) traverse the membrane as a helical segment.

It is found in the membrane. This is an uncharacterized protein from Dictyostelium discoideum (Social amoeba).